We begin with the raw amino-acid sequence, 506 residues long: Glutamate--tRNA ligase (506 aa).

A 'HIGH' region motif is present at residues 21–31 (PSPTGTPHVGM). The 'KMSKS' region signature appears at 265-269 (KLSKR). Lys268 contributes to the ATP binding site.

It belongs to the class-I aminoacyl-tRNA synthetase family. Glutamate--tRNA ligase type 1 subfamily. In terms of assembly, monomer.

The protein resides in the cytoplasm. It catalyses the reaction tRNA(Glu) + L-glutamate + ATP = L-glutamyl-tRNA(Glu) + AMP + diphosphate. Its function is as follows. Catalyzes the attachment of glutamate to tRNA(Glu) in a two-step reaction: glutamate is first activated by ATP to form Glu-AMP and then transferred to the acceptor end of tRNA(Glu). In Bifidobacterium longum (strain DJO10A), this protein is Glutamate--tRNA ligase.